The primary structure comprises 891 residues: Inter-alpha-trypsin inhibitor heavy chain H3 (891 aa).

The first 20 residues, 1–20 (MALAQWPYLILALLSGLAVS), serve as a signal peptide directing secretion. Positions 21–34 (GFPRNPSLLLGKRS) are excised as a propeptide. The VIT domain maps to 29-158 (LLGKRSLPGR…KVTFELTYEE (130 aa)). Asn-91 is a glycosylation site (N-linked (GlcNAc...) asparagine). The VWFA domain occupies 284-467 (SVVFVIDVSG…LQLQGFYEEV (184 aa)). Aspartate 1-(chondroitin 4-sulfate)-ester is present on Asp-651. Positions 652–891 (PHFIIQIPEK…HRDYIVPNLF (240 aa)) are excised as a propeptide.

The protein belongs to the ITIH family. In terms of assembly, I-alpha-I plasma protease inhibitors are assembled from one or two heavy chains (H1, H2 or H3) and one light chain, bikunin. Inter-alpha-inhibitor (I-alpha-I) is composed of H1, H2 and bikunin, inter-alpha-like inhibitor (I-alpha-LI) of H2 and bikunin, and pre-alpha-inhibitor (P-alpha-I) of H3 and bikunin.

It localises to the secreted. Its function is as follows. May act as a carrier of hyaluronan in serum or as a binding protein between hyaluronan and other matrix protein, including those on cell surfaces in tissues to regulate the localization, synthesis and degradation of hyaluronan which are essential to cells undergoing biological processes. The protein is Inter-alpha-trypsin inhibitor heavy chain H3 (ITIH3) of Bos taurus (Bovine).